The sequence spans 296 residues: Cytidine deaminase (296 aa).

2 consecutive CMP/dCMP-type deaminase domains span residues 47 to 167 and 186 to 296; these read SQDE…FGPA and ESAD…VDPV. A substrate-binding site is contributed by 88–90; that stretch reads NLE. Residue histidine 101 participates in Zn(2+) binding. Catalysis depends on glutamate 103, which acts as the Proton donor. Cysteine 128 and cysteine 131 together coordinate Zn(2+).

The protein belongs to the cytidine and deoxycytidylate deaminase family. In terms of assembly, homodimer. Zn(2+) is required as a cofactor.

It catalyses the reaction cytidine + H2O + H(+) = uridine + NH4(+). The enzyme catalyses 2'-deoxycytidine + H2O + H(+) = 2'-deoxyuridine + NH4(+). In terms of biological role, this enzyme scavenges exogenous and endogenous cytidine and 2'-deoxycytidine for UMP synthesis. This chain is Cytidine deaminase, found in Shewanella loihica (strain ATCC BAA-1088 / PV-4).